The following is a 416-amino-acid chain: Tyrosine--tRNA ligase (416 aa).

L-tyrosine is bound at residue tyrosine 41. The short motif at 46-55 is the 'HIGH' region element; it reads ATASSLHAGH. L-tyrosine-binding residues include tyrosine 175 and glutamine 179. Positions 235–239 match the 'KMSKS' region motif; the sequence is KMGKT. Position 238 (lysine 238) interacts with ATP. Positions 349–416 constitute an S4 RNA-binding domain; sequence LPVAKAFVDA…KKKHVLLKPV (68 aa).

Belongs to the class-I aminoacyl-tRNA synthetase family. TyrS type 1 subfamily. Homodimer.

It is found in the cytoplasm. It catalyses the reaction tRNA(Tyr) + L-tyrosine + ATP = L-tyrosyl-tRNA(Tyr) + AMP + diphosphate + H(+). Catalyzes the attachment of tyrosine to tRNA(Tyr) in a two-step reaction: tyrosine is first activated by ATP to form Tyr-AMP and then transferred to the acceptor end of tRNA(Tyr). This is Tyrosine--tRNA ligase from Xanthobacter autotrophicus (strain ATCC BAA-1158 / Py2).